We begin with the raw amino-acid sequence, 208 residues long: Proheparin-binding EGF-like growth factor (208 aa).

The first 23 residues, 1–23, serve as a signal peptide directing secretion; sequence MKLLPSVMLKLFLAAVLSALVTG. Positions 24-62 are excised as a propeptide; sequence ESLERLRRGLAAATSNPDPPTGSTNQLLPTGGDRAQGVQ. Over 24–160 the chain is Extracellular; it reads ESLERLRRGL…ENPLYTYDHT (137 aa). Disordered stretches follow at residues 35-57 and 80-104; these read AATSNPDPPTGSTNQLLPTGGDR and PQGLATPSKERNGKKKKKGKGLGKK. Positions 36 to 51 are enriched in polar residues; that stretch reads ATSNPDPPTGSTNQLL. The O-linked (GalNAc...) threonine glycan is linked to T85. Positions 91–102 are enriched in basic residues; that stretch reads NGKKKKKGKGLG. One can recognise an EGF-like domain in the interval 104–144; that stretch reads KRDPCLRKYKDYCIHGECRYLQEFRTPSCKCLPGYHGHRCH. 3 cysteine pairs are disulfide-bonded: C108/C121, C116/C132, and C134/C143. Residues 149–208 constitute a propeptide, C-terminal; it reads PVENPLYTYDHTTVLAVVAVVLSSVCLLVIVGLLMFRYHRRGGYDLESEEKVKLGVASSH. The helical transmembrane segment at 161 to 184 threads the bilayer; sequence TVLAVVAVVLSSVCLLVIVGLLMF. Residues 185 to 208 are Cytoplasmic-facing; that stretch reads RYHRRGGYDLESEEKVKLGVASSH.

As to quaternary structure, interacts with FBLN1. Interacts with EGFR and ERBB4. O-glycosylated. As to expression, most abundant in kidney, skeletal muscle, lung, spleen, brain and heart.

Its subcellular location is the secreted. The protein localises to the extracellular space. It localises to the cell membrane. Growth factor that mediates its effects via EGFR, ERBB2 and ERBB4. Required for normal cardiac valve formation and normal heart function. Promotes smooth muscle cell proliferation. May be involved in macrophage-mediated cellular proliferation. It is mitogenic for fibroblasts, but not endothelial cells. It is able to bind EGF receptor/EGFR with higher affinity than EGF itself and is a far more potent mitogen for smooth muscle cells than EGF. Also acts as a diphtheria toxin receptor. This Mus musculus (Mouse) protein is Proheparin-binding EGF-like growth factor (Hbegf).